The chain runs to 405 residues: Arrestin red cell isoform 2 (405 aa).

This sequence belongs to the arrestin family.

Its subcellular location is the cytoplasm. The polypeptide is Arrestin red cell isoform 2 (Oncorhynchus mykiss (Rainbow trout)).